A 363-amino-acid chain; its full sequence is 3-isopropylmalate dehydrogenase (363 aa).

Residue 78-89 coordinates NAD(+); that stretch reads GPKWGTGAVRPE. Positions 96, 106, 135, and 224 each coordinate substrate. The Mg(2+) site is built by aspartate 224, aspartate 249, and aspartate 253. An NAD(+)-binding site is contributed by 288-299; the sequence is GSAPDLPANKVN.

It belongs to the isocitrate and isopropylmalate dehydrogenases family. Homodimer. The cofactor is Mg(2+). It depends on Mn(2+) as a cofactor.

The protein localises to the cytoplasm. It carries out the reaction (2R,3S)-3-isopropylmalate + NAD(+) = 4-methyl-2-oxopentanoate + CO2 + NADH. The protein operates within amino-acid biosynthesis; L-leucine biosynthesis; L-leucine from 3-methyl-2-oxobutanoate: step 3/4. Catalyzes the oxidation of 3-carboxy-2-hydroxy-4-methylpentanoate (3-isopropylmalate) to 3-carboxy-4-methyl-2-oxopentanoate. The product decarboxylates to 4-methyl-2 oxopentanoate. The chain is 3-isopropylmalate dehydrogenase (LEU2) from Cyberlindnera jadinii (Torula yeast).